The following is a 301-amino-acid chain: Nucleotide-binding protein Noca_2527 (301 aa).

Position 26 to 33 (26 to 33 (GMTGAGRS)) interacts with ATP. A GTP-binding site is contributed by 77-80 (DVRS).

This sequence belongs to the RapZ-like family.

Functionally, displays ATPase and GTPase activities. The chain is Nucleotide-binding protein Noca_2527 from Nocardioides sp. (strain ATCC BAA-499 / JS614).